A 255-amino-acid polypeptide reads, in one-letter code: Imidazole glycerol phosphate synthase subunit HisF (255 aa).

Residues aspartate 11 and aspartate 130 contribute to the active site.

Belongs to the HisA/HisF family. Heterodimer of HisH and HisF.

It is found in the cytoplasm. It carries out the reaction 5-[(5-phospho-1-deoxy-D-ribulos-1-ylimino)methylamino]-1-(5-phospho-beta-D-ribosyl)imidazole-4-carboxamide + L-glutamine = D-erythro-1-(imidazol-4-yl)glycerol 3-phosphate + 5-amino-1-(5-phospho-beta-D-ribosyl)imidazole-4-carboxamide + L-glutamate + H(+). Its pathway is amino-acid biosynthesis; L-histidine biosynthesis; L-histidine from 5-phospho-alpha-D-ribose 1-diphosphate: step 5/9. Its function is as follows. IGPS catalyzes the conversion of PRFAR and glutamine to IGP, AICAR and glutamate. The HisF subunit catalyzes the cyclization activity that produces IGP and AICAR from PRFAR using the ammonia provided by the HisH subunit. The sequence is that of Imidazole glycerol phosphate synthase subunit HisF from Rhodopseudomonas palustris (strain ATCC BAA-98 / CGA009).